The following is a 245-amino-acid chain: 1-(5-phosphoribosyl)-5-[(5-phosphoribosylamino)methylideneamino] imidazole-4-carboxamide isomerase (245 aa).

The active-site Proton acceptor is the Asp-7. Asp-129 acts as the Proton donor in catalysis.

Belongs to the HisA/HisF family.

Its subcellular location is the cytoplasm. It carries out the reaction 1-(5-phospho-beta-D-ribosyl)-5-[(5-phospho-beta-D-ribosylamino)methylideneamino]imidazole-4-carboxamide = 5-[(5-phospho-1-deoxy-D-ribulos-1-ylimino)methylamino]-1-(5-phospho-beta-D-ribosyl)imidazole-4-carboxamide. It participates in amino-acid biosynthesis; L-histidine biosynthesis; L-histidine from 5-phospho-alpha-D-ribose 1-diphosphate: step 4/9. The sequence is that of 1-(5-phosphoribosyl)-5-[(5-phosphoribosylamino)methylideneamino] imidazole-4-carboxamide isomerase from Shewanella sp. (strain W3-18-1).